The following is a 278-amino-acid chain: Cyclin-C (278 aa).

One can recognise a Cyclin N-terminal domain in the interval 41 to 139 (NVIQALGEHL…ILECEFYLLE (99 aa)). Residues 247–278 (TILSKMPKPKPPPNSEGEQGPNGSQNSSYSQS) form a disordered region. Residues 267-278 (PNGSQNSSYSQS) show a composition bias toward polar residues. At serine 270 the chain carries Phosphoserine.

The protein belongs to the cyclin family. Cyclin C subfamily. Component of the Mediator complex, which is composed of MED1, MED4, MED6, MED7, MED8, MED9, MED10, MED11, MED12, MED13, MED13L, MED14, MED15, MED16, MED17, MED18, MED19, MED20, MED21, MED22, MED23, MED24, MED25, MED26, MED27, MED29, MED30, MED31, CCNC, CDK8 and CDC2L6/CDK11. The MED12, MED13, CCNC and CDK8 subunits form a distinct module termed the CDK8 module. Mediator containing the CDK8 module is less active than Mediator lacking this module in supporting transcriptional activation. Individual preparations of the Mediator complex lacking one or more distinct subunits have been variously termed ARC, CRSP, DRIP, PC2, SMCC and TRAP. The cylin/CDK pair formed by CCNC/CDK8 also associates with the large subunit of RNA polymerase II.

The protein resides in the nucleus. Its function is as follows. Component of the Mediator complex, a coactivator involved in regulated gene transcription of nearly all RNA polymerase II-dependent genes. Mediator functions as a bridge to convey information from gene-specific regulatory proteins to the basal RNA polymerase II transcription machinery. Mediator is recruited to promoters by direct interactions with regulatory proteins and serves as a scaffold for the assembly of a functional preinitiation complex with RNA polymerase II and the general transcription factors. Binds to and activates cyclin-dependent kinase CDK8 that phosphorylates the CTD (C-terminal domain) of the large subunit of RNA polymerase II (RNAp II), which may inhibit the formation of a transcription initiation complex. The polypeptide is Cyclin-C (Ccnc) (Rattus norvegicus (Rat)).